The following is a 128-amino-acid chain: Large ribosomal subunit protein bL17 (128 aa).

Belongs to the bacterial ribosomal protein bL17 family. As to quaternary structure, part of the 50S ribosomal subunit. Contacts protein L32.

This chain is Large ribosomal subunit protein bL17, found in Pseudomonas syringae pv. syringae (strain B728a).